Reading from the N-terminus, the 239-residue chain is Small ribosomal subunit protein eS6B (239 aa).

Phosphoserine occurs at positions 148, 235, and 236.

The protein belongs to the eukaryotic ribosomal protein eS6 family. As to quaternary structure, component of the small ribosomal subunit (SSU). Mature yeast ribosomes consist of a small (40S) and a large (60S) subunit. The 40S small subunit contains 1 molecule of ribosomal RNA (18S rRNA) and at least 33 different proteins. The large 60S subunit contains 3 rRNA molecules (25S, 5.8S and 5S rRNA) and at least 46 different proteins. Interacts with snoRNA U3. uS11 interacts with MPP10. Component of the ribosomal small subunit (SSU) processome composed of at least 40 protein subunits and snoRNA U3.

The protein localises to the cytoplasm. Its function is as follows. Component of the ribosome, a large ribonucleoprotein complex responsible for the synthesis of proteins in the cell. The small ribosomal subunit (SSU) binds messenger RNAs (mRNAs) and translates the encoded message by selecting cognate aminoacyl-transfer RNA (tRNA) molecules. The large subunit (LSU) contains the ribosomal catalytic site termed the peptidyl transferase center (PTC), which catalyzes the formation of peptide bonds, thereby polymerizing the amino acids delivered by tRNAs into a polypeptide chain. The nascent polypeptides leave the ribosome through a tunnel in the LSU and interact with protein factors that function in enzymatic processing, targeting, and the membrane insertion of nascent chains at the exit of the ribosomal tunnel. eS6 is involved in nucleolar processing of pre-18S ribosomal RNA and ribosome assembly. In Schizosaccharomyces pombe (strain 972 / ATCC 24843) (Fission yeast), this protein is Small ribosomal subunit protein eS6B (rps602).